A 189-amino-acid chain; its full sequence is Phosphoheptose isomerase (189 aa).

The region spanning 34 to 189 (LVEAFRKGNK…CDLVEKALFA (156 aa)) is the SIS domain. A substrate-binding site is contributed by 49–51 (NGG). Zn(2+) is bound by residues His58 and Glu62. Residues Glu62, 91-92 (ND), 117-119 (STS), Ser122, and Gln169 each bind substrate. 2 residues coordinate Zn(2+): Gln169 and His177.

The protein belongs to the SIS family. GmhA subfamily. As to quaternary structure, homotetramer. It depends on Zn(2+) as a cofactor.

Its subcellular location is the cytoplasm. The enzyme catalyses 2 D-sedoheptulose 7-phosphate = D-glycero-alpha-D-manno-heptose 7-phosphate + D-glycero-beta-D-manno-heptose 7-phosphate. It functions in the pathway carbohydrate biosynthesis; D-glycero-D-manno-heptose 7-phosphate biosynthesis; D-glycero-alpha-D-manno-heptose 7-phosphate and D-glycero-beta-D-manno-heptose 7-phosphate from sedoheptulose 7-phosphate: step 1/1. Its function is as follows. Catalyzes the isomerization of sedoheptulose 7-phosphate in D-glycero-D-manno-heptose 7-phosphate. This is Phosphoheptose isomerase from Pelobacter propionicus (strain DSM 2379 / NBRC 103807 / OttBd1).